Reading from the N-terminus, the 423-residue chain is Putative competence-damage inducible protein (423 aa).

This sequence belongs to the CinA family.

This is Putative competence-damage inducible protein from Streptococcus pyogenes serotype M49 (strain NZ131).